Here is a 350-residue protein sequence, read N- to C-terminus: Protein RecA (350 aa).

65 to 72 (GPESSGKT) contacts ATP.

It belongs to the RecA family.

The protein resides in the cytoplasm. Functionally, can catalyze the hydrolysis of ATP in the presence of single-stranded DNA, the ATP-dependent uptake of single-stranded DNA by duplex DNA, and the ATP-dependent hybridization of homologous single-stranded DNAs. It interacts with LexA causing its activation and leading to its autocatalytic cleavage. This Nautilia profundicola (strain ATCC BAA-1463 / DSM 18972 / AmH) protein is Protein RecA.